We begin with the raw amino-acid sequence, 555 residues long: Chaperonin GroEL (555 aa).

Residues 29–32 (TLGP), Lys-50, 86–90 (DGTTT), Gly-418, and Asp-499 contribute to the ATP site. The tract at residues 528–555 (HEEDNNTGNRSGGGVGGGHHGGMGGMDF) is disordered. The span at 537–555 (RSGGGVGGGHHGGMGGMDF) shows a compositional bias: gly residues.

Belongs to the chaperonin (HSP60) family. As to quaternary structure, forms a cylinder of 14 subunits composed of two heptameric rings stacked back-to-back. Interacts with the co-chaperonin GroES.

It localises to the cytoplasm. It carries out the reaction ATP + H2O + a folded polypeptide = ADP + phosphate + an unfolded polypeptide.. Functionally, together with its co-chaperonin GroES, plays an essential role in assisting protein folding. The GroEL-GroES system forms a nano-cage that allows encapsulation of the non-native substrate proteins and provides a physical environment optimized to promote and accelerate protein folding. This chain is Chaperonin GroEL, found in Orientia tsutsugamushi (Rickettsia tsutsugamushi).